The primary structure comprises 340 residues: Galactoside alpha-(1,2)-fucosyltransferase 2 (340 aa).

Residues 1 to 7 (MLSMQAS) are Cytoplasmic-facing. The chain crosses the membrane as a helical; Signal-anchor for type II membrane protein span at residues 8–28 (FFFPTGPFILFVFTASTIFHL). The Lumenal portion of the chain corresponds to 29–340 (QQRMVKIQPT…EADLSPLLKH (312 aa)). Residues Asn185, Asn251, Asn279, and Asn305 are each glycosylated (N-linked (GlcNAc...) asparagine).

It is found in the golgi apparatus. The protein resides in the golgi stack membrane. It catalyses the reaction a beta-D-galactosyl-(1-&gt;3)-N-acetyl-beta-D-glucosaminyl derivative + GDP-beta-L-fucose = an alpha-L-Fuc-(1-&gt;2)-beta-D-Gal-(1-&gt;3)-beta-D-GlcNAc derivative + GDP + H(+). The enzyme catalyses a beta-D-galactosyl-(1-&gt;4)-N-acetyl-beta-D-glucosaminyl derivative + GDP-beta-L-fucose = an alpha-L-Fuc-(1-&gt;2)-beta-D-Gal-(1-&gt;4)-beta-D-GlcNAc derivative + GDP + H(+). The catalysed reaction is a neolactoside nLc4Cer + GDP-beta-L-fucose = a neolactoside IV(2)-alpha-Fuc-nLc4Cer + GDP + H(+). It carries out the reaction a neolactoside nLc4Cer(d18:1(4E)) + GDP-beta-L-fucose = a neolactoside IV(2)-alpha-Fuc-nLc4Cer(d18:1(4E)) + GDP + H(+). It catalyses the reaction a ganglioside GM1 + GDP-beta-L-fucose = a ganglioside Fuc-GM1 + GDP + H(+). The enzyme catalyses a ganglioside GA1 + GDP-beta-L-fucose = a ganglioside Fuc-GA1 + GDP + H(+). The catalysed reaction is Lc4Cer + GDP-beta-L-fucose = alpha-L-fucosyl-(1-&gt;2)-beta-D-galactosyl-(1-&gt;3)-N-acetyl-beta-D-glucosaminyl-(1-&gt;3)-beta-D-galactosyl-(1-&gt;4)-beta-D-glucosyl-(1&lt;-&gt;1')-ceramide + GDP + H(+). It carries out the reaction a beta-D-Gal-(1-&gt;3)-beta-D-GlcNAc-(1-&gt;3)-beta-D-Gal-(1-&gt;4)-beta-D-Glc-(1&lt;-&gt;1')-Cer(d18:1(4E)) + GDP-beta-L-fucose = alpha-L-fucosyl-(1-&gt;2)- beta-D-galactosyl-(1-&gt;3)-N-acetyl-beta-D-glucosaminyl-(1-&gt;3)-beta-D-galactosyl-(1-&gt;4)-beta-D-glucosyl-(1&lt;-&gt;1')-N-acylsphing-4-enine + GDP + H(+). It catalyses the reaction a ganglioside GD1b + GDP-beta-L-fucose = a ganglioside Fuc-GD1b + GDP + H(+). The enzyme catalyses a ganglioside GM1 (d18:1(4E)) + GDP-beta-L-fucose = a ganglioside Fuc-GM1 (d18:1(4E)) + GDP + H(+). The catalysed reaction is a globoside GalGb4Cer (d18:1(4E)) + GDP-beta-L-fucose = a globoside Globo-H (d18:1(4E)) + GDP + H(+). It carries out the reaction a lactoside III(4)-a-Fuc-Lc4Cer + GDP-beta-L-fucose = a lactoside IV(2),III(4)-a-[Fuc]2-Lc4Cer + GDP + H(+). It catalyses the reaction beta-D-galactosyl-(1-&gt;3)-N-acetyl-D-galactosamine + GDP-beta-L-fucose = alpha-L-fucosyl-(1-&gt;2)-beta-D-galactosyl-(1-&gt;3)-N-acetyl-D-galactosamine + GDP + H(+). The protein operates within protein modification; protein glycosylation. In terms of biological role, catalyzes the transfer of L-fucose, from a guanosine diphosphate-beta-L-fucose, to the terminal galactose on both O- and N-linked glycans chains of cell surface glycoproteins and glycolipids and the resulting epitope regulates several processes such as cell-cell interaction including host-microbe interaction, cell surface expression and cell proliferation. Preferentially fucosylates gangliosides GA1 and GM1 in the antrum, cecum and colon and in the female reproductive organs. Fucosylated host glycoproteins or glycolipids mediate interaction with intestinal microbiota influencing its composition. Creates a soluble precursor oligosaccharide FuC-alpha ((1,2)Galbeta-) called the H antigen which is an essential substrate for the final step in the soluble ABO blood group antigen synthesis pathway. In Sus scrofa (Pig), this protein is Galactoside alpha-(1,2)-fucosyltransferase 2.